The sequence spans 71 residues: MKKKIHPMSLDILATCSCGNSLKIKSTIKKDILLDVCNKCHPFYTGTQKKLNIGGRVSKFKKRFDNIVYKK.

Zn(2+) contacts are provided by Cys-16, Cys-18, Cys-37, and Cys-40.

The protein belongs to the bacterial ribosomal protein bL31 family. Type A subfamily. In terms of assembly, part of the 50S ribosomal subunit. The cofactor is Zn(2+).

Binds the 23S rRNA. This chain is Large ribosomal subunit protein bL31, found in Wigglesworthia glossinidia brevipalpis.